Consider the following 316-residue polypeptide: Bifunctional peptidase and (3S)-lysyl hydroxylase JMJD7 (316 aa).

The JmjC domain maps to 128 to 307 (VQKQCSNLPS…LKYSYFQLLD (180 aa)). Histidine 178, aspartate 180, and histidine 277 together coordinate Fe cation.

As to quaternary structure, homodimer; disulfide-linked. Interacts with DRG1 and DRG2. Fe(2+) serves as cofactor.

It is found in the nucleus. Its subcellular location is the cytoplasm. The enzyme catalyses L-lysyl-[protein] + 2-oxoglutarate + O2 = (3S)-3-hydroxy-L-lysyl-[protein] + succinate + CO2. Bifunctional enzyme that acts both as an endopeptidase and 2-oxoglutarate-dependent monooxygenase. Endopeptidase that cleaves histones N-terminal tails at the carboxyl side of methylated arginine or lysine residues, to generate 'tailless nucleosomes', which may trigger transcription elongation. Preferentially recognizes and cleaves monomethylated and dimethylated arginine residues of histones H2, H3 and H4. After initial cleavage, continues to digest histones tails via its aminopeptidase activity. Additionally, may play a role in protein biosynthesis by modifying the translation machinery. Acts as a Fe(2+) and 2-oxoglutarate-dependent monooxygenase, catalyzing (S)-stereospecific hydroxylation at C-3 of 'Lys-22' of DRG1 and 'Lys-21' of DRG2 translation factors (TRAFAC), promoting their interaction with ribonucleic acids (RNA). The protein is Bifunctional peptidase and (3S)-lysyl hydroxylase JMJD7 of Homo sapiens (Human).